Here is a 283-residue protein sequence, read N- to C-terminus: Small aggregate formation protein (283 aa).

It is found in the cytoplasm. Knockout of the gene for this protein causes small aggregate formation. May regulate the secretion or processing of a secreted factor that regulates aggregate size. The chain is Small aggregate formation protein (smlA) from Dictyostelium discoideum (Social amoeba).